We begin with the raw amino-acid sequence, 542 residues long: Phosphoenolpyruvate carboxykinase (ATP) (542 aa).

3 residues coordinate substrate: Arg-67, Tyr-208, and Lys-214. Residues Lys-214, His-233, and 249 to 257 (GLSGTGKTT) contribute to the ATP site. The Mn(2+) site is built by Lys-214 and His-233. Residue Asp-270 participates in Mn(2+) binding. ATP contacts are provided by residues Glu-298, Arg-334, 450-451 (RI), and Thr-456. Residue Arg-334 coordinates substrate.

Belongs to the phosphoenolpyruvate carboxykinase (ATP) family. Monomer. The cofactor is Mn(2+).

Its subcellular location is the cytoplasm. The catalysed reaction is oxaloacetate + ATP = phosphoenolpyruvate + ADP + CO2. Its pathway is carbohydrate biosynthesis; gluconeogenesis. Involved in the gluconeogenesis. Catalyzes the conversion of oxaloacetate (OAA) to phosphoenolpyruvate (PEP) through direct phosphoryl transfer between the nucleoside triphosphate and OAA. The polypeptide is Phosphoenolpyruvate carboxykinase (ATP) (Vibrio vulnificus (strain CMCP6)).